The primary structure comprises 54 residues: Ovomucoid (54 aa).

The 51-residue stretch at 4–54 (VDCSDYPKPVCSLEYMPLCGSDNKTYGNKCNFCNAVADSNGTLTLSHFGKC) folds into the Kazal-like domain. 3 disulfide bridges follow: Cys6-Cys36, Cys14-Cys33, and Cys22-Cys54. N-linked (GlcNAc...) asparagine glycosylation is present at Asn43.

It is found in the secreted. The protein is Ovomucoid of Guira guira (Guira cuckoo).